The primary structure comprises 307 residues: Phosphonates import ATP-binding protein PhnC (307 aa).

Positions 4-252 (IRIERLSKTF…RLHALYGDDA (249 aa)) constitute an ABC transporter domain. 37–44 (GASGSGKS) lines the ATP pocket. A compositionally biased stretch (basic and acidic residues) spans 265–275 (AAREAAGEPAR). A disordered region spans residues 265 to 307 (AAREAAGEPARRAPAAFDSAGSPDLPDSQPASPRRMLAASSMR).

Belongs to the ABC transporter superfamily. Phosphonates importer (TC 3.A.1.9.1) family. The complex is composed of two ATP-binding proteins (PhnC), two transmembrane proteins (PhnE) and a solute-binding protein (PhnD).

It is found in the cell inner membrane. The enzyme catalyses phosphonate(out) + ATP + H2O = phosphonate(in) + ADP + phosphate + H(+). Functionally, part of the ABC transporter complex PhnCDE involved in phosphonates import. Responsible for energy coupling to the transport system. The polypeptide is Phosphonates import ATP-binding protein PhnC (Burkholderia pseudomallei (strain 1710b)).